We begin with the raw amino-acid sequence, 436 residues long: FAD-dependent monooxygenase pigN (436 aa).

Glu40, Gly53, and Arg118 together coordinate FAD. Residue Arg200 is part of the active site. FAD-binding residues include Asp316 and Ala329.

The protein belongs to the paxM FAD-dependent monooxygenase family. It depends on FAD as a cofactor.

It functions in the pathway secondary metabolite biosynthesis. In terms of biological role, FAD-dependent monooxygenase; part of the gene cluster that mediates the biosynthesis of azaphilone pigments (MonAzPs), a complex mixture of compounds with a common azaphilone skeleton very widely used as food colorants. Within the pathway, pigN hydroxylates the benzaldehyde M7PKS-1 intermediate at C-4 to form the pyran ring. The first step of the pathway is performed by the nrPKS pigA that forms the hexaketide precursor from successive condensations of five malonyl-CoA units, with a simple acetyl-CoA starter unit. The role of esterase pigG is not clear, but it may play at most a supplementary role in the formation of the benzaldehyde produced by the pigA nrPKS. This very reactive benzaldehyde is intercepted by the pigC ketoreductase that to provide the first stable enzyme-free MonAzPs intermediate, 6-(4-hydroxy-2-oxopentyl)-3-methyl-2,4-dioxocyclohexane carbaldehyde, also known as M7PKS-1. The FAD-dependent monooxygenase pigN hydroxylates M7PKS-1 at C-4, which triggers the formation of the pyran ring. PigJ, pigK and pigD are involved in the acetylation of the pyran ring. PigJ and pigK form the two subunits of a dedicated fungal FAS that produces the side chain fatty acyl moiety of MonAzPs and pigD transfers the fatty acyl chain to the C-4 alcohol. PigM and pigO are involved in the elimination of the omega-1 alcohol. PigM acts as an O-acetyltransferase that synthesizes the putative O-11 acetyl intermediate whereas pigO eliminates acetic acid to yield an intermediate with a C10(11) double bond. The dehydration of the C-11 alcohol followed by the reduction of the C6(7) double bond by the NAD(P)H-dependent oxidoreductase pigE increases the electrophilicity of the C-5 ketone of the resulting acyl benzopyran. This in turn sets up the C-5 ketone for an intramolecular Knoevenagel aldol condensation with the C-20 enol of the side chain. This condensation affords the characteristic linear tricyclic carbon skeletons of the yellow pigments that serve as the common precursors for the classical yellow pigments monascin and ankaflavin, orange pigments rubopunctatin and monascorubrin, and red pigments ribropunctamine and monascorubramine. The FAD-dependent oxidoreductase pigF is especially invoved in the biosynthesis of orange and red pigments via desaturation of C6(7). This chain is FAD-dependent monooxygenase pigN, found in Monascus ruber (Mold).